The chain runs to 683 residues: U4/U6 small nuclear ribonucleoprotein Prp3 (683 aa).

The region spanning 1 to 87 (MALSKRELDE…HSKSSSDRSR (87 aa)) is the PWI domain. Over residues 73-107 (GRSSRHSKSSSDRSRKRELKEVFGDDSEISKESSG) the composition is skewed to basic and acidic residues. The disordered stretch occupies residues 73–135 (GRSSRHSKSS…IPGPPSESPG (63 aa)). A Glycyl lysine isopeptide (Lys-Gly) (interchain with G-Cter in SUMO2) cross-link involves residue K139. The tract at residues 153–183 (IEERKKQLSFISPPTPQPKTPSSSQPERLPI) is disordered. Phosphoserine is present on S164. Residue T167 is modified to Phosphothreonine. Residues K244 and K252 each participate in a glycyl lysine isopeptide (Lys-Gly) (interchain with G-Cter in SUMO2) cross-link. The segment at 416–550 (NLVEHPAQLN…VHISVYRVRN (135 aa)) is mediates interaction with SART3. S619 is subject to Phosphoserine.

Component of the precatalytic spliceosome (spliceosome B complex). Component of the U4/U6-U5 tri-snRNP complex, a building block of the precatalytic spliceosome (spliceosome B complex). The U4/U6-U5 tri-snRNP complex is composed of the U4, U6 and U5 snRNAs and at least PRPF3, PRPF4, PRPF6, PRPF8, PRPF31, SNRNP200, TXNL4A, SNRNP40, SNRPB, SNRPD1, SNRPD2, SNRPD3, SNRPE, SNRPF, SNRPG, DDX23, CD2BP2, PPIH, SNU13, EFTUD2, SART1 and USP39, plus LSM2, LSM3, LSM4, LSM5, LSM6, LSM7 and LSM8. Interacts directly with PRPF4. Part of a heteromeric complex containing PPIH, PRPF3 and PRPF4 that is stable in the absence of RNA. Interacts with SART3; the interaction is direct and recruits the deubiquitinase USP4 to PRPF3. Interacts with PRPF19. Interacts ('Lys-63'-linked polyubiquitinated) with PRPF8 (via the MPN (JAB/Mov34) domain); may stabilize the U4/U6-U5 tri-snRNP complex. Interacts with ERCC6. Post-translationally, ubiquitinated. Undergoes 'Lys-63'-linked polyubiquitination by PRPF19 and deubiquitination by USP4. 'Lys-63'-linked ubiquitination increases the affinity for PRPF8 and may regulate the assembly of the U4/U6-U5 tri-snRNP complex.

The protein localises to the nucleus. The protein resides in the nucleus speckle. In terms of biological role, plays a role in pre-mRNA splicing as component of the U4/U6-U5 tri-snRNP complex that is involved in spliceosome assembly, and as component of the precatalytic spliceosome (spliceosome B complex). The protein is U4/U6 small nuclear ribonucleoprotein Prp3 (PRPF3) of Pongo abelii (Sumatran orangutan).